Here is a 308-residue protein sequence, read N- to C-terminus: Bifunctional protein FolD (308 aa).

NADP(+) contacts are provided by residues 171–173 (GRS), Ser-198, and Ile-239.

It belongs to the tetrahydrofolate dehydrogenase/cyclohydrolase family. Homodimer.

It carries out the reaction (6R)-5,10-methylene-5,6,7,8-tetrahydrofolate + NADP(+) = (6R)-5,10-methenyltetrahydrofolate + NADPH. The catalysed reaction is (6R)-5,10-methenyltetrahydrofolate + H2O = (6R)-10-formyltetrahydrofolate + H(+). The protein operates within one-carbon metabolism; tetrahydrofolate interconversion. Its function is as follows. Catalyzes the oxidation of 5,10-methylenetetrahydrofolate to 5,10-methenyltetrahydrofolate and then the hydrolysis of 5,10-methenyltetrahydrofolate to 10-formyltetrahydrofolate. The chain is Bifunctional protein FolD from Borreliella burgdorferi (strain ATCC 35210 / DSM 4680 / CIP 102532 / B31) (Borrelia burgdorferi).